Reading from the N-terminus, the 154-residue chain is Large ribosomal subunit protein uL13 (154 aa).

It belongs to the universal ribosomal protein uL13 family. Part of the 50S ribosomal subunit.

In terms of biological role, this protein is one of the early assembly proteins of the 50S ribosomal subunit, although it is not seen to bind rRNA by itself. It is important during the early stages of 50S assembly. The chain is Large ribosomal subunit protein uL13 from Mesorhizobium japonicum (strain LMG 29417 / CECT 9101 / MAFF 303099) (Mesorhizobium loti (strain MAFF 303099)).